The sequence spans 654 residues: Tumor necrosis factor alpha-induced protein 2 (654 aa).

2 disordered regions span residues 1–38 (MSEASSEDLVPPLEAGAAPYREEEEAAKKKKEKKKKSK) and 50–78 (GKKKKGQPSSAEPEDAAGSRQGLDGPPPT). The span at 28 to 38 (KKKKEKKKKSK) shows a compositional bias: basic residues.

It belongs to the SEC6 family.

Its function is as follows. May play a role as a mediator of inflammation and angiogenesis. The sequence is that of Tumor necrosis factor alpha-induced protein 2 (TNFAIP2) from Homo sapiens (Human).